The chain runs to 700 residues: Calpain-2 catalytic subunit (700 aa).

Ala-2 is subject to N-acetylalanine. Positions 2 to 19 (AGIAAKLAKDREAAEGLG) are cleaved as a propeptide — anchors to the small subunit. One can recognise a Calpain catalytic domain in the interval 45–344 (LFQDPSFPAI…YSRLEICNLT (300 aa)). Residues Ile-89, Gly-91, and Asp-96 each contribute to the Ca(2+) site. Cys-105 is a catalytic residue. Ca(2+)-binding residues include Glu-175, Gln-229, and Lys-230. Residues His-262 and Asn-286 contribute to the active site. Ca(2+)-binding residues include Glu-292, Asp-299, and Glu-323. Residues 345-514 (PDTLTSDTYK…KKADYQAVDD (170 aa)) are domain III. Residues 515 to 529 (EIEANLEEFDISEDD) form a linker region. The interval 530-700 (IDDGFRRLFA…LISWLCFSVL (171 aa)) is domain IV. Residues Ala-542, Asp-545, Glu-547, Glu-552, Asp-585, Asp-587, Ser-589, Lys-591, Glu-596, Asp-615, Asp-617, Ser-619, Thr-621, Glu-626, Asp-658, and Asn-661 each contribute to the Ca(2+) site. EF-hand domains are found at residues 572–605 (FSIE…TKIQ) and 602–637 (TKIQ…AGFK). Residues 667 to 700 (VRLETLFKIFKQLDPENTGTIELDLISWLCFSVL) enclose the EF-hand 3 domain.

It belongs to the peptidase C2 family. Forms a heterodimer with a small (regulatory) subunit (CAPNS1). Interacts with CPEB3; this leads to cleavage of CPEB3. Interacts with PIDD1 alternative open reading frame protein altPIDD1. The cofactor is Ca(2+). In terms of tissue distribution, ubiquitous.

The protein localises to the cytoplasm. The protein resides in the cell membrane. It carries out the reaction Broad endopeptidase specificity.. With respect to regulation, activated by 200-1000 micromolar concentrations of calcium and inhibited by calpastatin. Calcium-regulated non-lysosomal thiol-protease which catalyzes limited proteolysis of substrates involved in cytoskeletal remodeling and signal transduction. Proteolytically cleaves MYOC at 'Arg-226'. Proteolytically cleaves CPEB3 following neuronal stimulation which abolishes CPEB3 translational repressor activity, leading to translation of CPEB3 target mRNAs. The polypeptide is Calpain-2 catalytic subunit (CAPN2) (Homo sapiens (Human)).